We begin with the raw amino-acid sequence, 231 residues long: Ribonuclease P protein component 3 (231 aa).

It belongs to the eukaryotic/archaeal RNase P protein component 3 family. In terms of assembly, consists of a catalytic RNA component and at least 4-5 protein subunits.

The protein localises to the cytoplasm. It catalyses the reaction Endonucleolytic cleavage of RNA, removing 5'-extranucleotides from tRNA precursor.. Its function is as follows. Part of ribonuclease P, a protein complex that generates mature tRNA molecules by cleaving their 5'-ends. This Methanococcus vannielii (strain ATCC 35089 / DSM 1224 / JCM 13029 / OCM 148 / SB) protein is Ribonuclease P protein component 3.